The chain runs to 124 residues: Small ribosomal subunit protein uS12 (124 aa).

D89 is modified (3-methylthioaspartic acid).

Belongs to the universal ribosomal protein uS12 family. Part of the 30S ribosomal subunit. Contacts proteins S8 and S17. May interact with IF1 in the 30S initiation complex.

With S4 and S5 plays an important role in translational accuracy. In terms of biological role, interacts with and stabilizes bases of the 16S rRNA that are involved in tRNA selection in the A site and with the mRNA backbone. Located at the interface of the 30S and 50S subunits, it traverses the body of the 30S subunit contacting proteins on the other side and probably holding the rRNA structure together. The combined cluster of proteins S8, S12 and S17 appears to hold together the shoulder and platform of the 30S subunit. The sequence is that of Small ribosomal subunit protein uS12 from Shewanella loihica (strain ATCC BAA-1088 / PV-4).